A 333-amino-acid polypeptide reads, in one-letter code: D-glutamate N-acetyltransferase (333 aa).

It belongs to the N-acetyltransferase DgcN family.

It catalyses the reaction D-glutamate + acetyl-CoA = N-acetyl-D-glutamate + CoA + H(+). The protein operates within amino-acid degradation. N-acetyltransferase involved in a deamination-independent D-glutamate degradation pathway, named the DgcN-DgcA pathway. Catalyzes the transfer of the acetyl moiety from acetyl-CoA to D-glutamate to generate N-acetyl-D-glutamate. The chain is D-glutamate N-acetyltransferase from Tritonibacter scottomollicae (Epibacterium scottomollicae).